The primary structure comprises 383 residues: Mannan endo-1,4-beta-mannosidase (383 aa).

An N-terminal signal peptide occupies residues 1 to 35 (MRNARSTLITTAGMAFAVLGLLFALAGPSAGRAEA). The CBM10 domain maps to 339–377 (GGSTGGTAPNGYPYCVNGGASDPDGDGWGWENSRSCVVR).

Belongs to the glycosyl hydrolase 5 (cellulase A) family. Monomer.

The catalysed reaction is Random hydrolysis of (1-&gt;4)-beta-D-mannosidic linkages in mannans, galactomannans and glucomannans.. The protein is Mannan endo-1,4-beta-mannosidase (manA) of Streptomyces lividans.